A 147-amino-acid chain; its full sequence is 3-dehydroquinate dehydratase (147 aa).

The active-site Proton acceptor is the tyrosine 22. Substrate-binding residues include asparagine 74, histidine 80, and aspartate 87. Histidine 101 (proton donor) is an active-site residue. Residues 102-103 and arginine 112 each bind substrate; that span reads IS.

The protein belongs to the type-II 3-dehydroquinase family. As to quaternary structure, homododecamer.

The catalysed reaction is 3-dehydroquinate = 3-dehydroshikimate + H2O. The protein operates within metabolic intermediate biosynthesis; chorismate biosynthesis; chorismate from D-erythrose 4-phosphate and phosphoenolpyruvate: step 3/7. Catalyzes a trans-dehydration via an enolate intermediate. The polypeptide is 3-dehydroquinate dehydratase (Lachnospira eligens (strain ATCC 27750 / DSM 3376 / VPI C15-48 / C15-B4) (Eubacterium eligens)).